The chain runs to 179 residues: MSRIGKLPIQVPAGVDVTIDGRTVAVKGPKGSLTHTVAAPIEVSKGEDGVLNVTRPNDERQNKALHGLSRTLVANMITGVTAGYSKALEISGVGYRVQAKGSNLEFALGYSHPILIEAPEGITFKVESPTKLSVEGIDKQKVGEVAANIRKLRKPDPYKAKGVKYAGEVIRRKVGKAGK.

Belongs to the universal ribosomal protein uL6 family. As to quaternary structure, part of the 50S ribosomal subunit.

Functionally, this protein binds to the 23S rRNA, and is important in its secondary structure. It is located near the subunit interface in the base of the L7/L12 stalk, and near the tRNA binding site of the peptidyltransferase center. This chain is Large ribosomal subunit protein uL6, found in Streptomyces griseus subsp. griseus (strain JCM 4626 / CBS 651.72 / NBRC 13350 / KCC S-0626 / ISP 5235).